Here is a 466-residue protein sequence, read N- to C-terminus: RUS family member 1 (466 aa).

A2 carries the N-acetylalanine modification. A helical membrane pass occupies residues 245–265 (LLMLPLVSDCPSLSLGCFVLL).

It belongs to the RUS1 family.

It is found in the membrane. The protein is RUS family member 1 of Mus musculus (Mouse).